A 191-amino-acid polypeptide reads, in one-letter code: Peptidyl-tRNA hydrolase (191 aa).

Tyrosine 14 provides a ligand contact to tRNA. Histidine 19 (proton acceptor) is an active-site residue. The tRNA site is built by tyrosine 65, asparagine 67, and asparagine 113.

Belongs to the PTH family. Monomer.

The protein resides in the cytoplasm. It catalyses the reaction an N-acyl-L-alpha-aminoacyl-tRNA + H2O = an N-acyl-L-amino acid + a tRNA + H(+). Its function is as follows. Hydrolyzes ribosome-free peptidyl-tRNAs (with 1 or more amino acids incorporated), which drop off the ribosome during protein synthesis, or as a result of ribosome stalling. In terms of biological role, catalyzes the release of premature peptidyl moieties from peptidyl-tRNA molecules trapped in stalled 50S ribosomal subunits, and thus maintains levels of free tRNAs and 50S ribosomes. In Nitrosospira multiformis (strain ATCC 25196 / NCIMB 11849 / C 71), this protein is Peptidyl-tRNA hydrolase.